Here is a 337-residue protein sequence, read N- to C-terminus: Protein-arginine kinase (337 aa).

A Phosphagen kinase C-terminal domain is found at 12-240 (IVIASKVKIL…NKLILREKNQ (229 aa)). Residues 15–19 (ASKVK), 162–166 (RTKVF), and 193–198 (KSIYNS) contribute to the ATP site.

It belongs to the ATP:guanido phosphotransferase family.

It catalyses the reaction L-arginyl-[protein] + ATP = N(omega)-phospho-L-arginyl-[protein] + ADP + H(+). In terms of biological role, catalyzes the specific phosphorylation of arginine residues in proteins. In Clostridium perfringens (strain 13 / Type A), this protein is Protein-arginine kinase.